The sequence spans 357 residues: MSSSLFAPTIETIDYPFPPKPVPLSDAQKADYKARIKQLLIEKDAVLVAHYYTDPEIQALAEETGGCVSDSLEMARFGRDHPAKTLIVAGVKFMGETAKILSPEKTILMPTLEATCSLDLGCPIDKFSAFCDAHPDHTVVVYANTSAAVKARADWVVTSSIALEIVEHLDSEGKKIIWGPDRHLGSYIAKQTGAEMLMWQGDCIVHDEFKANALRDLKSVYPDAAILVHPESPASVVAMADAVGSTSQLIKAAQTMPNERFIVATDRGIFYKMQQAAPGKTLIEAPTGGNGATCKSCAHCPWMAMNGLKAIEASLSNSDKTTHEIFVDEDLRVKALIPLTRMLDFAKTLNMKVKGNA.

Iminosuccinate-binding residues include histidine 50 and serine 71. Cysteine 116 is a binding site for [4Fe-4S] cluster. Residues 142–144 (YAN) and serine 159 each bind iminosuccinate. [4Fe-4S] cluster is bound at residue cysteine 203. Iminosuccinate-binding positions include 229–231 (HPE) and threonine 246. Cysteine 300 lines the [4Fe-4S] cluster pocket.

It belongs to the quinolinate synthase family. Type 1 subfamily. The cofactor is [4Fe-4S] cluster.

It is found in the cytoplasm. The enzyme catalyses iminosuccinate + dihydroxyacetone phosphate = quinolinate + phosphate + 2 H2O + H(+). It participates in cofactor biosynthesis; NAD(+) biosynthesis; quinolinate from iminoaspartate: step 1/1. Its function is as follows. Catalyzes the condensation of iminoaspartate with dihydroxyacetone phosphate to form quinolinate. The protein is Quinolinate synthase of Shewanella oneidensis (strain ATCC 700550 / JCM 31522 / CIP 106686 / LMG 19005 / NCIMB 14063 / MR-1).